A 123-amino-acid polypeptide reads, in one-letter code: Small ribosomal subunit protein uS12 (123 aa).

Asp-89 is subject to 3-methylthioaspartic acid.

Belongs to the universal ribosomal protein uS12 family. Part of the 30S ribosomal subunit. Contacts proteins S8 and S17. May interact with IF1 in the 30S initiation complex.

Its function is as follows. With S4 and S5 plays an important role in translational accuracy. Interacts with and stabilizes bases of the 16S rRNA that are involved in tRNA selection in the A site and with the mRNA backbone. Located at the interface of the 30S and 50S subunits, it traverses the body of the 30S subunit contacting proteins on the other side and probably holding the rRNA structure together. The combined cluster of proteins S8, S12 and S17 appears to hold together the shoulder and platform of the 30S subunit. The sequence is that of Small ribosomal subunit protein uS12 from Gluconacetobacter diazotrophicus (strain ATCC 49037 / DSM 5601 / CCUG 37298 / CIP 103539 / LMG 7603 / PAl5).